Here is a 481-residue protein sequence, read N- to C-terminus: 3-isopropylmalate dehydratase large subunit (481 aa).

Cys357, Cys417, and Cys420 together coordinate [4Fe-4S] cluster.

Belongs to the aconitase/IPM isomerase family. LeuC type 1 subfamily. In terms of assembly, heterodimer of LeuC and LeuD. It depends on [4Fe-4S] cluster as a cofactor.

It catalyses the reaction (2R,3S)-3-isopropylmalate = (2S)-2-isopropylmalate. Its pathway is amino-acid biosynthesis; L-leucine biosynthesis; L-leucine from 3-methyl-2-oxobutanoate: step 2/4. Its function is as follows. Catalyzes the isomerization between 2-isopropylmalate and 3-isopropylmalate, via the formation of 2-isopropylmaleate. The sequence is that of 3-isopropylmalate dehydratase large subunit from Mycolicibacterium gilvum (strain PYR-GCK) (Mycobacterium gilvum (strain PYR-GCK)).